A 103-amino-acid chain; its full sequence is Large ribosomal subunit protein bL21 (103 aa).

It belongs to the bacterial ribosomal protein bL21 family. As to quaternary structure, part of the 50S ribosomal subunit. Contacts protein L20.

Functionally, this protein binds to 23S rRNA in the presence of protein L20. This is Large ribosomal subunit protein bL21 from Enterobacter sp. (strain 638).